Consider the following 1254-residue polypeptide: AF4/FMR2 family member 3 (1254 aa).

Basic and acidic residues predominate over residues 45–62 (YEPDRNALRRKERERRSQ). 5 disordered regions span residues 45-90 (YEPD…GDEL), 139-190 (AESR…AAQQ), 261-324 (RPMD…GENN), 350-534 (EPSK…EGQD), and 552-752 (KTTC…SVGS). 2 stretches are compositionally biased toward polar residues: residues 67 to 76 (DSGSFNSGYS) and 143 to 158 (AQPQPSTVCSTASSTP). Over residues 359 to 369 (KDSQLVSSGHS) the composition is skewed to polar residues. Positions 406 to 418 (QQAAQRTALRALA) are enriched in low complexity. The segment covering 421 to 433 (SVVQQTNCRGSAP) has biased composition (polar residues). A compositionally biased stretch (low complexity) spans 441–472 (SSSSGGSSSSSDSESTSGSDSETESSSSSSES). Over residues 552 to 561 (KTTCKEEQRP) the composition is skewed to basic and acidic residues. Low complexity predominate over residues 577–605 (SPPAAVAVTAAALPPAVPSAPTESAPAPT). Residues 615–633 (RRTERTSAGDGANCHRPEE) show a composition bias toward basic and acidic residues. Low complexity-rich tracts occupy residues 694–704 (TESSSSSSSSD) and 732–749 (AASSNNNSNSNSSTSRAS). The residue at position 782 (Ser782) is a Phosphoserine. The segment at 813–883 (PGVLSAPSAK…ASTNNTLSGN (71 aa)) is disordered. Residues 857–869 (REIKKVQGRKESA) show a composition bias toward basic and acidic residues. The span at 873-883 (AASTNNTLSGN) shows a compositional bias: polar residues. Ser908 bears the Phosphoserine mark. 2 disordered regions span residues 919–991 (ASED…HRDC) and 1128–1171 (AAQA…SGLS). 2 stretches are compositionally biased toward polar residues: residues 922-941 (DLTSSSRPHGNGLLTSASSN) and 960-985 (ASHNSSENGTLHSKSRPQTEPWSPGS). Composition is skewed to low complexity over residues 1132–1146 (PSPWGSSGKSTGSPS) and 1154–1171 (PASSVGSQGSLSSSSGLS).

Belongs to the AF4 family. In terms of tissue distribution, highest levels found in lymphoid tissues, lower levels in brain and lung.

It is found in the nucleus. Functionally, putative transcription activator that may function in lymphoid development and oncogenesis. The chain is AF4/FMR2 family member 3 (Aff3) from Mus musculus (Mouse).